The sequence spans 211 residues: Imidazole glycerol phosphate synthase subunit HisH (211 aa).

A Glutamine amidotransferase type-1 domain is found at 3–211 (VIAVIDYDMG…VNQIRVKAIA (209 aa)). Cys81 serves as the catalytic Nucleophile. Catalysis depends on residues His186 and Glu188.

In terms of assembly, heterodimer of HisH and HisF.

Its subcellular location is the cytoplasm. The enzyme catalyses 5-[(5-phospho-1-deoxy-D-ribulos-1-ylimino)methylamino]-1-(5-phospho-beta-D-ribosyl)imidazole-4-carboxamide + L-glutamine = D-erythro-1-(imidazol-4-yl)glycerol 3-phosphate + 5-amino-1-(5-phospho-beta-D-ribosyl)imidazole-4-carboxamide + L-glutamate + H(+). The catalysed reaction is L-glutamine + H2O = L-glutamate + NH4(+). It functions in the pathway amino-acid biosynthesis; L-histidine biosynthesis; L-histidine from 5-phospho-alpha-D-ribose 1-diphosphate: step 5/9. Functionally, IGPS catalyzes the conversion of PRFAR and glutamine to IGP, AICAR and glutamate. The HisH subunit catalyzes the hydrolysis of glutamine to glutamate and ammonia as part of the synthesis of IGP and AICAR. The resulting ammonia molecule is channeled to the active site of HisF. This chain is Imidazole glycerol phosphate synthase subunit HisH, found in Gloeothece citriformis (strain PCC 7424) (Cyanothece sp. (strain PCC 7424)).